We begin with the raw amino-acid sequence, 207 residues long: MLNKLSSLLKDAGISLTDHQKNQLIAYVNMLHKWNKAYNLTSVRDPNEMLVRHILDSIVVAPYLQGERFIDVGTGPGLPGIPLSIVRPEAHFTLLDSLGKRVRFLRQVQHELKLDNITPVQSRVEVFPAEPPFDGVISRAFASLDDMLNWCHHLPGPSGRYYALKGQLPEDEIASLPKEFQVESVVKLHVPGLEGERHLVVIKPNRI.

S-adenosyl-L-methionine contacts are provided by residues Gly73, Leu78, 124 to 125, and Arg139; that span reads VE.

This sequence belongs to the methyltransferase superfamily. RNA methyltransferase RsmG family.

It is found in the cytoplasm. It carries out the reaction guanosine(527) in 16S rRNA + S-adenosyl-L-methionine = N(7)-methylguanosine(527) in 16S rRNA + S-adenosyl-L-homocysteine. Functionally, specifically methylates the N7 position of guanine in position 527 of 16S rRNA. The polypeptide is Ribosomal RNA small subunit methyltransferase G (Escherichia fergusonii (strain ATCC 35469 / DSM 13698 / CCUG 18766 / IAM 14443 / JCM 21226 / LMG 7866 / NBRC 102419 / NCTC 12128 / CDC 0568-73)).